Reading from the N-terminus, the 595-residue chain is FERM domain-containing protein 3 (595 aa).

In terms of domain architecture, FERM spans 32-312 (MKCTIRLLDD…ENQAFYKYAK (281 aa)). A helical membrane pass occupies residues 529–549 (LLVVGLGLLLFVFPLLLLLLE).

Its subcellular location is the membrane. Its function is as follows. Putative tumor suppressor gene that may be implicated in the origin and progression of lung cancer. The polypeptide is FERM domain-containing protein 3 (Frmd3) (Mus musculus (Mouse)).